We begin with the raw amino-acid sequence, 199 residues long: Peroxiredoxin-1 (199 aa).

Position 2 is an N-acetylserine (Ser2). The region spanning 6-165 (AKIGYPAPNF…IIRLVQAFQF (160 aa)) is the Thioredoxin domain. Lys7 is subject to N6-acetyllysine; alternate. A Glycyl lysine isopeptide (Lys-Gly) (interchain with G-Cter in SUMO2); alternate cross-link involves residue Lys7. Residues Lys16 and Lys27 each carry the N6-acetyllysine modification. Residue Ser32 is modified to Phosphoserine. At Lys35 the chain carries N6-acetyllysine; alternate. Lys35 carries the post-translational modification N6-succinyllysine; alternate. Residue Cys52 is the Cysteine sulfenic acid (-SOH) intermediate of the active site. Thr90 carries the post-translational modification Phosphothreonine. A Glycyl lysine isopeptide (Lys-Gly) (interchain with G-Cter in SUMO2) cross-link involves residue Lys120. At Lys136 the chain carries N6-acetyllysine. A Glycyl lysine isopeptide (Lys-Gly) (interchain with G-Cter in SUMO1) cross-link involves residue Lys185. Lys197 bears the N6-acetyllysine mark.

It belongs to the peroxiredoxin family. AhpC/Prx1 subfamily. Homodimer; disulfide-linked, upon oxidation. 5 homodimers assemble to form a ring-like decamer. Interacts with GDPD5; forms a mixed-disulfide with GDPD5. Interacts with SESN1 and SESN2. Interacts with FAM107A. In terms of processing, phosphorylated on Thr-90 during the M-phase, which leads to a decrease in enzymatic activity. Acetylation increases reducing activity and resistance to superoxidation. Deacetylated by HDAC6 which decreases reducing activity. Found in various tissues; high concentration in liver.

It is found in the cytoplasm. The enzyme catalyses a hydroperoxide + [thioredoxin]-dithiol = an alcohol + [thioredoxin]-disulfide + H2O. Thiol-specific peroxidase that catalyzes the reduction of hydrogen peroxide and organic hydroperoxides to water and alcohols, respectively. Plays a role in cell protection against oxidative stress by detoxifying peroxides and as sensor of hydrogen peroxide-mediated signaling events. Might participate in the signaling cascades of growth factors and tumor necrosis factor-alpha by regulating the intracellular concentrations of H(2)O(2). Reduces an intramolecular disulfide bond in GDPD5 that gates the ability to GDPD5 to drive postmitotic motor neuron differentiation. The chain is Peroxiredoxin-1 (Prdx1) from Mus musculus (Mouse).